The following is a 49-amino-acid chain: Large ribosomal subunit protein bL33B (49 aa).

This sequence belongs to the bacterial ribosomal protein bL33 family.

This Staphylococcus epidermidis (strain ATCC 12228 / FDA PCI 1200) protein is Large ribosomal subunit protein bL33B (rpmG2).